A 317-amino-acid polypeptide reads, in one-letter code: Malate dehydrogenase (317 aa).

Residues 13 to 18 (GAGNIG) and aspartate 38 contribute to the NAD(+) site. 2 residues coordinate substrate: arginine 87 and arginine 93. NAD(+) is bound by residues asparagine 100 and 123-125 (VTN). Residues asparagine 125 and arginine 156 each coordinate substrate. The active-site Proton acceptor is histidine 180.

The protein belongs to the LDH/MDH superfamily. MDH type 3 family.

It carries out the reaction (S)-malate + NAD(+) = oxaloacetate + NADH + H(+). Functionally, catalyzes the reversible oxidation of malate to oxaloacetate. The protein is Malate dehydrogenase of Anaplasma marginale (strain St. Maries).